Here is a 441-residue protein sequence, read N- to C-terminus: Ribosomal protein uS12 methylthiotransferase RimO (441 aa).

The 111-residue stretch at 8–118 (PKIGFVSLGC…VLQHVHHYVP (111 aa)) folds into the MTTase N-terminal domain. 6 residues coordinate [4Fe-4S] cluster: Cys17, Cys53, Cys82, Cys150, Cys154, and Cys157. The Radical SAM core domain maps to 136 to 373 (LTPRHYAYLK…MQLQQQISAE (238 aa)). The TRAM domain maps to 376-441 (QEKVGREILV…DEYDLWGSRV (66 aa)).

This sequence belongs to the methylthiotransferase family. RimO subfamily. The cofactor is [4Fe-4S] cluster.

The protein resides in the cytoplasm. The catalysed reaction is L-aspartate(89)-[ribosomal protein uS12]-hydrogen + (sulfur carrier)-SH + AH2 + 2 S-adenosyl-L-methionine = 3-methylsulfanyl-L-aspartate(89)-[ribosomal protein uS12]-hydrogen + (sulfur carrier)-H + 5'-deoxyadenosine + L-methionine + A + S-adenosyl-L-homocysteine + 2 H(+). In terms of biological role, catalyzes the methylthiolation of an aspartic acid residue of ribosomal protein uS12. The polypeptide is Ribosomal protein uS12 methylthiotransferase RimO (Salmonella typhi).